We begin with the raw amino-acid sequence, 401 residues long: MKVFKDSVIYLVGELSSKLVPFLLLPYLSRKLGVEGYGSLSYYQTFLSLFLIVVSLTQEGAISRYFYFYGKRSLNLVVNTGYAYTTIIGSIILIGCWIAQSEILFYAALSSIFQSFLNVQLSVRQCQKKAWSYAFIQFSLTVTGAVFTVALLEYYQNDLVEKRILAILLSNLVVWFFSYFLYRKSTTSKKYQFKHYQSALFYILGFGLPLILHYASFFLKGQLDRIFIYHKFSETDLGLYAMGAQLALVVSIAIQALNKAIIPYFYEALKQKKLVVQQLHKWALFSFLLIPIPALIMWIIPEDVLVWILGSQFVGTKYYFILFLISTTLSIPYLILVNYLFYYGKNKLISQCSVLSTIIYVASLVALTFTEIKYIPYAGIIGSLSIIPILYFMTSKVSKTL.

11 helical membrane-spanning segments follow: residues 8 to 28 (VIYLVGELSSKLVPFLLLPYL), 36 to 56 (GYGSLSYYQTFLSLFLIVVSL), 87 to 107 (IIGSIILIGCWIAQSEILFYA), 132 to 152 (SYAFIQFSLTVTGAVFTVALL), 162 to 182 (KRILAILLSNLVVWFFSYFLY), 199 to 219 (ALFYILGFGLPLILHYASFFL), 237 to 257 (LGLYAMGAQLALVVSIAIQAL), 282 to 302 (WALFSFLLIPIPALIMWIIPE), 320 to 340 (FILFLISTTLSIPYLILVNYL), 352 to 372 (CSVLSTIIYVASLVALTFTEI), and 374 to 394 (YIPYAGIIGSLSIIPILYFMT).

Belongs to the polysaccharide synthase family. HI_0867/HI_1700 subfamily.

The protein resides in the cell membrane. The polypeptide is Lsg locus putative protein 1 (Haemophilus influenzae (strain ATCC 51907 / DSM 11121 / KW20 / Rd)).